The sequence spans 967 residues: Haze protective factor 1 (967 aa).

The N-terminal stretch at 1 to 23 (MFNRFNKLQAALALVLYSQSALG) is a signal peptide. Asn-28 and Asn-35 each carry an N-linked (GlcNAc...) asparagine glycan. Residues 72–301 (SSSTEVSSSI…STSSASTASG (230 aa)) are disordered. 9 repeat units span residues 93–105 (SITS…SGSS), 106–118 (SITS…SSSS), 119–131 (SATE…SGSS), 132–144 (SATE…SGSS), 153–165 (SATE…SGST), 166–178 (SATE…SGSS), 179–191 (SATE…SGSS), 192–204 (SATE…SGSS), and 205–217 (SATE…SGSS). The interval 93-278 (SITSSGSSVS…QSGSSVSGSS (186 aa)) is 13 X approximate repeats, Ser-rich. The stretch at 218–230 (SATESGSASSVPS) is one 1-10; approximate repeat. One copy of the 1-11; approximate repeat lies at 234–247 (SVTESGSSSSASES). One copy of the 1-12; approximate repeat lies at 248–259 (SITQSGTASGSS). The 1-13 repeat unit spans residues 266 to 278 (SVTQSGSSVSGSS). N-linked (GlcNAc...) asparagine glycosylation is found at Asn-493, Asn-601, and Asn-638. 4 tandem repeats follow at residues 745–780 (SSKS…ATTT), 781–815 (SPKS…TTTV), 816–854 (SPKT…ETSA), and 855–893 (APKT…ATSA). The interval 745–902 (SSKSYTTVTV…ASPKSYTTVT (158 aa)) is 4.5 X approximate tandem repeats, Thr-rich. Residues 836 to 857 (KTVTSEAPKETSETSETSAAPK) form a disordered region. The 2-5; truncated repeat unit spans residues 894-902 (SPKSYTTVT). The GPI-anchor amidated alanine moiety is linked to residue Ala-946. The propeptide at 947-967 (AGLNANTLNALVGIFVLAFFN) is removed in mature form.

Belongs to the SRP1/TIP1 family. In terms of processing, the GPI-anchor is attached to the protein in the endoplasmic reticulum and serves to target the protein to the cell surface. There, the glucosamine-inositol phospholipid moiety is cleaved off and the GPI-modified mannoprotein is covalently attached via its lipidless GPI glycan remnant to the 1,6-beta-glucan of the outer cell wall layer.

It is found in the secreted. The protein localises to the cell wall. It localises to the membrane. In terms of biological role, involved in cell wall organization and biosynthesis. In Saccharomyces cerevisiae (strain ATCC 204508 / S288c) (Baker's yeast), this protein is Haze protective factor 1 (HPF1).